The primary structure comprises 376 residues: MENSRSTLIIFFAYTTIILIGSINCRDNNNNNLVTNQSALFVFGDSVFDAGNNNYIDTLPSFRSNYWPYGQTTFKFPTGRVSDGRTIPDFIAEYAWLPLIPAYLQPSNGKNQFPYGVSFASAGAGALVGTFPGMVINLKSQLNNFKKVEKLLRSTLGEAQGKMVISRAVYLFHIGVNDYQYPFSTNSSIFQSSPQEIYVDFVVGNTTAVIKEVYKIGGRKFGFLNMGAYDCAPASLIIDQTKIGTCFKPVTELINLHNEKLESGLRRLERELSGFKYALHDYHTSLSVRMNNPSKYGFKEGKMACCGTGPLRGINTCGGRMGVSQSYELCEKVTDYLFFDHFHLTEKAHQQIAELIWSGPTNVTKPYNLQALFELN.

An N-terminal signal peptide occupies residues 1–25 (MENSRSTLIIFFAYTTIILIGSINC). The N-linked (GlcNAc...) asparagine glycan is linked to N36. S46 (nucleophile) is an active-site residue. Residues N186 and N205 are each glycosylated (N-linked (GlcNAc...) asparagine). Residues D340 and H343 contribute to the active site. N362 carries N-linked (GlcNAc...) asparagine glycosylation.

Belongs to the 'GDSL' lipolytic enzyme family. In terms of tissue distribution, expressed seedlings, roots and stems.

The protein resides in the secreted. Involved in the resistance to the necrotropic bacteria Erwinia carotovora, probably via negative regulation of auxin signaling. Possesses lipase and antimicrobial activities, inhibiting germination of fungal spores (e.g. Alternaria brassicicola). The chain is GDSL esterase/lipase 2 (GLIP2) from Arabidopsis thaliana (Mouse-ear cress).